A 939-amino-acid chain; its full sequence is Isoleucine--tRNA ligase (939 aa).

The 'HIGH' region motif lies at 59 to 69 (PYANGDIHIGH). Glutamate 570 provides a ligand contact to L-isoleucyl-5'-AMP. A 'KMSKS' region motif is present at residues 611–615 (KMSKS). Lysine 614 is an ATP binding site. The Zn(2+) site is built by cysteine 902, cysteine 905, cysteine 922, and cysteine 925.

Belongs to the class-I aminoacyl-tRNA synthetase family. IleS type 1 subfamily. Monomer. Zn(2+) serves as cofactor.

The protein localises to the cytoplasm. It carries out the reaction tRNA(Ile) + L-isoleucine + ATP = L-isoleucyl-tRNA(Ile) + AMP + diphosphate. Catalyzes the attachment of isoleucine to tRNA(Ile). As IleRS can inadvertently accommodate and process structurally similar amino acids such as valine, to avoid such errors it has two additional distinct tRNA(Ile)-dependent editing activities. One activity is designated as 'pretransfer' editing and involves the hydrolysis of activated Val-AMP. The other activity is designated 'posttransfer' editing and involves deacylation of mischarged Val-tRNA(Ile). This chain is Isoleucine--tRNA ligase, found in Nitrosomonas europaea (strain ATCC 19718 / CIP 103999 / KCTC 2705 / NBRC 14298).